A 721-amino-acid chain; its full sequence is Polyribonucleotide nucleotidyltransferase (721 aa).

Mg(2+)-binding residues include D490 and D496. A KH domain is found at 557 to 618 (PRILTLKINP…EAVRQKIEGL (62 aa)). The 69-residue stretch at 625-693 (GEEYEGTVVK…DRGKIDLIRP (69 aa)) folds into the S1 motif domain. The tract at residues 696–721 (EGKIAPREPRAARAGGDRGGRPPRRE) is disordered.

The protein belongs to the polyribonucleotide nucleotidyltransferase family. It depends on Mg(2+) as a cofactor.

It localises to the cytoplasm. It catalyses the reaction RNA(n+1) + phosphate = RNA(n) + a ribonucleoside 5'-diphosphate. Functionally, involved in mRNA degradation. Catalyzes the phosphorolysis of single-stranded polyribonucleotides processively in the 3'- to 5'-direction. The polypeptide is Polyribonucleotide nucleotidyltransferase (Deinococcus geothermalis (strain DSM 11300 / CIP 105573 / AG-3a)).